The primary structure comprises 285 residues: Ubiquinone biosynthesis protein COQ4, mitochondrial (285 aa).

The transit peptide at 1–11 (MPPTVRQGIRT) directs the protein to the mitochondrion. Zn(2+) is bound by residues His-166, Asp-167, His-170, and Glu-182.

This sequence belongs to the COQ4 family. Component of a multi-subunit COQ enzyme complex, composed of at least COQ3, COQ4, COQ5, COQ6, COQ7 and COQ9. Zn(2+) serves as cofactor.

The protein resides in the mitochondrion inner membrane. It carries out the reaction a 4-hydroxy-3-methoxy-5-(all-trans-polyprenyl)benzoate + H(+) = a 2-methoxy-6-(all-trans-polyprenyl)phenol + CO2. It participates in cofactor biosynthesis; ubiquinone biosynthesis. Lyase that catalyzes the C1-decarboxylation of 4-hydroxy-3-methoxy-5-(all-trans-polyprenyl)benzoic acid into 2-methoxy-6-(all-trans-polyprenyl)phenol during ubiquinone biosynthesis. This chain is Ubiquinone biosynthesis protein COQ4, mitochondrial, found in Paracoccidioides brasiliensis (strain Pb18).